We begin with the raw amino-acid sequence, 337 residues long: Replication-associated protein (337 aa).

In terms of domain architecture, CRESS-DNA virus Rep endonuclease spans 12 to 114 (RLQTKYVFLT…DGNVITKGEF (103 aa)). The RCR-1 signature appears at 19–22 (FLTY). The a divalent metal cation site is built by glutamate 53, histidine 61, and histidine 63. The RCR-2 signature appears at 61-63 (HLH). Tyrosine 101 (for DNA cleavage activity) is an active-site residue. An RCR-3 motif is present at residues 101–104 (YISK). Aspartate 105 contacts a divalent metal cation. The interval 163–175 (SANKLFPPQPEIY) is oligomerization. 216-223 (GPSRTGKT) lines the ATP pocket. Residues 239–257 (IDFTVYDDHATYNVIDDIP) are transactivation. A Nuclear localization signal motif is present at residues 279-289 (KYGKKKKIKGG).

Belongs to the geminiviridae Rep protein family. As to quaternary structure, homooligomer. Rep binds to repeated DNA motifs (iterons). Forms the O-complex, which is a Rep-DNA complex involved in the initiation of RCR. Part of the C- and V-complexes which are RepA-Rep-DNA complexes involved in the c-sense and v-sense transcription. Mg(2+) is required as a cofactor. Mn(2+) serves as cofactor.

The protein resides in the host nucleus. Its function is as follows. Essential for the replication of viral ssDNA. The closed circular ssDNA genome is first converted to a superhelical dsDNA. Rep binds a specific region at the genome origin of replication. It introduces an endonucleolytic nick within the conserved sequence 5'-TAATATTAC-3' in the intergenic region of the genome present in all geminiviruses, thereby initiating the rolling circle replication (RCR). Following cleavage, binds covalently to the 5'-phosphate of DNA as a tyrosyl ester. The cleavage gives rise to a free 3'-OH that serves as a primer for the cellular DNA polymerase. The polymerase synthesizes the (+) strand DNA by rolling circle mechanism. After one round of replication, a Rep-catalyzed nucleotidyl transfer reaction releases a circular single-stranded virus genome, thereby terminating the replication. Displays origin-specific DNA cleavage, nucleotidyl transferase, ATPase and helicase activities. Acts as an inhibitor of C-sense gene transcription. The protein is Replication-associated protein of Tobacco yellow dwarf virus (strain Australia) (TYDV).